Consider the following 754-residue polypeptide: MARFPTSPAPNLLLRLFSSNKRASSPTAALLTGDFHLIRHFSAGTAARAVKDEKEPWWKESMDKLRNIGISAHIDSGKTTLTERVLFYTGRIHEIHEVRGRDGVGAKMDSMDLEREKGITIQSAATYCTWKDYKVNIIDTPGHVDFTIEVERALRVLDGAILVLCSVGGVQSQSITVDRQMRRYEVPRVAFINKLDRMGADPWKVLNQARAKLRHHSAAVQVPIGLEENFQGLIDLIHVKAYFFHGSSGENVVAGDIPADMEGLVGDKRRELIETVSEVDDVLAEKFLNDEPVSAAELEEAIRRATIAQKFVPVFMGSAFKNKGVQPLLDGVVSFLPSPNEVNNYALDQNNNEERVTLTGSPDGPLVALAFKLEEGRFGQLTYLRVYEGVIKKGDFIINVNTGKRIKVPRLVRMHSNDMEDIQEAHAGQIVAVFGIECASGDTFTDGSVKYTMTSMNVPEPVMSLAVQPVSKDSGGQFSKALNRFQKEDPTFRVGLDPESGQTIISGMGELHLDIYVERMRREYKVDATVGKPRVNFRETITQRAEFDYLHKKQSGGAGQYGRVTGYVEPLPPGSKEKFEFENMIVGQAIPSGFIPAIEKGFKEAANSGSLIGHPVENLRIVLTDGASHAVDSSELAFKMAAIYAFRLCYTAARPVILEPVMLVELKVPTEFQGTVAGDINKRKGIIVGNDQEGDDSVITANVPLNNMFGYSTSLRSMTQGKGEFTMEYKEHSAVSNEVQAQLVNAYSASKATE.

The 278-residue stretch at 63 to 340 folds into the tr-type G domain; that stretch reads DKLRNIGISA…GVVSFLPSPN (278 aa). GTP is bound by residues 72–79, 139–143, and 193–196; these read AHIDSGKT, DTPGH, and NKLD.

The protein belongs to the TRAFAC class translation factor GTPase superfamily. Classic translation factor GTPase family. EF-G/EF-2 subfamily. As to expression, expressed in cotyledons and adult leaves at the same levels.

It localises to the mitochondrion. It participates in protein biosynthesis; polypeptide chain elongation. Mitochondrial GTPase that catalyzes the GTP-dependent ribosomal translocation step during translation elongation. During this step, the ribosome changes from the pre-translocational (PRE) to the post-translocational (POST) state as the newly formed A-site-bound peptidyl-tRNA and P-site-bound deacylated tRNA move to the P and E sites, respectively. Catalyzes the coordinated movement of the two tRNA molecules, the mRNA and conformational changes in the ribosome. In Arabidopsis thaliana (Mouse-ear cress), this protein is Elongation factor G-2, mitochondrial (MEFG2).